The following is a 612-amino-acid chain: Elongation factor 4 (612 aa).

Positions asparagine 11–serine 193 constitute a tr-type G domain. GTP-binding positions include aspartate 23–threonine 28 and asparagine 140–aspartate 143.

Belongs to the TRAFAC class translation factor GTPase superfamily. Classic translation factor GTPase family. LepA subfamily.

It is found in the cell membrane. It catalyses the reaction GTP + H2O = GDP + phosphate + H(+). Its function is as follows. Required for accurate and efficient protein synthesis under certain stress conditions. May act as a fidelity factor of the translation reaction, by catalyzing a one-codon backward translocation of tRNAs on improperly translocated ribosomes. Back-translocation proceeds from a post-translocation (POST) complex to a pre-translocation (PRE) complex, thus giving elongation factor G a second chance to translocate the tRNAs correctly. Binds to ribosomes in a GTP-dependent manner. This is Elongation factor 4 from Lactobacillus acidophilus (strain ATCC 700396 / NCK56 / N2 / NCFM).